We begin with the raw amino-acid sequence, 500 residues long: Polyenoic fatty acid isomerase (500 aa).

An N-terminal signal peptide occupies residues 1-21 (MSLNRVLHIFLIAYLACTALT).

In terms of assembly, homodimer. The cofactor is an oxidized flavin. In terms of processing, glycosylated.

It carries out the reaction (5Z,8Z,11Z,14Z,17Z)-eicosapentaenoate = (5Z,7E,9E,14Z,17Z)-icosapentaenoate. Functionally, involved in the biosynthesis of conjugated triene-containing fatty acids. Catalyzes the isomerization of a wide range of substrates containing three or more methylene interrupted olefins into a Z,E,E conjugated triene functionality. May be involved in a stress tolerance mechanism as response to intertidal habitats with direct sunlight, desiccation and high temperature. In vitro substrates include arachidonic acid ((5Z,8Z,11Z,14Z)-eicosatetraenoic acid), EPA ((5Z,8Z, 11Z,14Z,17Z)-eicosapentaenoic acid), DHA ((4Z,7Z,10Z,13Z,16Z,19Z)-docosahexenoic acid), adrenic acid ((7Z,10Z,13Z,16Z)-docosatetraenoic acid), anandamide (arachidonyl-N-ethanolamide) and eicosatrienoic acid ((5Z,8Z,11Z)-eicosatrienoic acid). Gamma-linolenic acid (18:3 6Z,9Z,12Z) and dihomo-gamma-linolenic acid (20:3 8Z,11Z,14Z) are transformed into mixtures of conjugated diene and triene fatty acids, linoleic acid is only transformed to a conjugated diene. The chain is Polyenoic fatty acid isomerase from Ptilota filicina (Red alga).